A 147-amino-acid polypeptide reads, in one-letter code: Hemoglobin subunit gamma (147 aa).

The Globin domain maps to 3 to 147; it reads NFTAEDKAAI…VASALGSRYH (145 aa). Residues His64 and His93 each coordinate heme b.

This sequence belongs to the globin family. As to quaternary structure, heterotetramer of two alpha chains and two gamma chains in fetal hemoglobin (Hb F). Red blood cells.

Its function is as follows. Gamma chains make up the fetal hemoglobin F, in combination with alpha chains. This chain is Hemoglobin subunit gamma (HBG), found in Aotus azarae (Azara's night monkey).